Here is a 208-residue protein sequence, read N- to C-terminus: FMN-dependent NADH:quinone oxidoreductase (208 aa).

Residues histidine 10, serine 17 to serine 19, methionine 104 to leucine 107, serine 148 to tyrosine 153, and aspartate 184 contribute to the FMN site.

Belongs to the azoreductase type 1 family. As to quaternary structure, homodimer. It depends on FMN as a cofactor.

The catalysed reaction is 2 a quinone + NADH + H(+) = 2 a 1,4-benzosemiquinone + NAD(+). It catalyses the reaction N,N-dimethyl-1,4-phenylenediamine + anthranilate + 2 NAD(+) = 2-(4-dimethylaminophenyl)diazenylbenzoate + 2 NADH + 2 H(+). Quinone reductase that provides resistance to thiol-specific stress caused by electrophilic quinones. Functionally, also exhibits azoreductase activity. Catalyzes the reductive cleavage of the azo bond in aromatic azo compounds to the corresponding amines. Requires NADH, but not NADPH, as an electron donor for its activity. The enzyme can also reduce a wide range of sulfonated azo dyes. The substrate preference order is methyl Red &gt; Orange II &gt; Ponceau BS &gt; Ponceau S &gt; Orange G &gt; Amaranth. The protein is FMN-dependent NADH:quinone oxidoreductase of Enterococcus faecalis (strain ATCC 700802 / V583).